The primary structure comprises 390 residues: Precorrin-6Y C(5,15)-methyltransferase [decarboxylating] (390 aa).

The protein belongs to the precorrin methyltransferase family.

It catalyses the reaction precorrin-6B + 2 S-adenosyl-L-methionine = precorrin-8X + 2 S-adenosyl-L-homocysteine + CO2 + 3 H(+). The protein operates within cofactor biosynthesis; adenosylcobalamin biosynthesis; cob(II)yrinate a,c-diamide from precorrin-2 (aerobic route): step 7/10. Catalyzes the methylation of both C-5 and C-15 in precorrin-6Y to form precorrin-8X. This chain is Precorrin-6Y C(5,15)-methyltransferase [decarboxylating] (cobL), found in Mycobacterium tuberculosis (strain CDC 1551 / Oshkosh).